The chain runs to 469 residues: MTAVTRFAPSPTGFLHVGGARTALYSWLYAKSQGGKFVLRIEDTDIERSTQEAIDAILEGMEWLGLTWDDGPYYQTKRFDRYKALINEMLEEGKAYKCFMSSAELDEIREKQKANGEKPRYPGTWRDRTDHPEGEPFVIRFKNPLEGKVLVKDHIRGNIEIANSELDDLIILRSDGTPTYNFCVVVDDWDMGITHVVRGEDHINNTPRQINILQALGAPVPEYAHVSMILGDDGKKLSKRHGAVSVMQYRDDGFLPQALLNYLVRLGWSYGDQEIFSKEEMIELFSLDAIGQSASAFNTDKLIWLNQHYIKELPVSEVLPYAKWHFEQQGIDVSNGPALEEVIKVQADRVKTLKELAEISGYFYQEYEDFDEKAAKKHLRPVAQEPLEAVKAALMALSTWNAETIHEAINKTAETLGVGMGKVGMPLRVAATGSGNSPSLDVTLNLLKPEQIAQRIDKALIYIANRQQS.

Residues 9-19 (PSPTGFLHVGG) carry the 'HIGH' region motif. Residues 236-240 (KLSKR) carry the 'KMSKS' region motif. Position 239 (K239) interacts with ATP.

It belongs to the class-I aminoacyl-tRNA synthetase family. Glutamate--tRNA ligase type 1 subfamily. Monomer.

Its subcellular location is the cytoplasm. It catalyses the reaction tRNA(Glu) + L-glutamate + ATP = L-glutamyl-tRNA(Glu) + AMP + diphosphate. Functionally, catalyzes the attachment of glutamate to tRNA(Glu) in a two-step reaction: glutamate is first activated by ATP to form Glu-AMP and then transferred to the acceptor end of tRNA(Glu). This Pseudoalteromonas atlantica (strain T6c / ATCC BAA-1087) protein is Glutamate--tRNA ligase.